Here is a 128-residue protein sequence, read N- to C-terminus: MKKVKTVSKSKKEFITGVVHIRATFNNTFVNVTDVHGNTLCQTSVGACGFSGSRKSTPYAAGKAAESAAKNAMERFGMKVVSVIIRGPGFGTEAAVKAFQSCGLTVTSIADKTAIPHNGCRLRKKRRV.

The protein belongs to the universal ribosomal protein uS11 family. As to quaternary structure, part of the 30S ribosomal subunit. Interacts with proteins S7 and S18. Binds to IF-3.

Its function is as follows. Located on the platform of the 30S subunit, it bridges several disparate RNA helices of the 16S rRNA. Forms part of the Shine-Dalgarno cleft in the 70S ribosome. The protein is Small ribosomal subunit protein uS11 of Wolbachia pipientis wMel.